Consider the following 458-residue polypeptide: NADH-quinone oxidoreductase subunit N (458 aa).

14 consecutive transmembrane segments (helical) span residues 2–22 (LLLLPEITLTLIALLGQCFAL), 30–50 (IIYNIVILLCIISIFLTFKYS), 71–91 (IILLFTIVSLIIYRDYSILVG), 93–113 (TLKFEFITLMLLSIVGIFVAI), 118–138 (FLLLFCGMELTALTSYALAGF), 153–173 (FILGSLVSCLSLFGISFIYGF), 196–216 (LIIGIVLFLSSIFFKLASSPL), 235–255 (FTAASKIGMVIVLLNISKLII), 261–281 (INYNLIKIIAILSMLFGAFGA), 290–310 (LMAYSTILNIGYVLIGVLLHN), 319–339 (LYILIYAVVSIGFFTCLIMLF), 361–381 (IAALISIVMFSMIGIPPLTGF), 397–417 (FTLAYCGIFTSVVAAFYYLKV), and 438–458 (LLLINYLVLGFLLFGSFIILF).

It belongs to the complex I subunit 2 family. NDH-1 is composed of 14 different subunits. Subunits NuoA, H, J, K, L, M, N constitute the membrane sector of the complex.

The protein localises to the cell inner membrane. The enzyme catalyses a quinone + NADH + 5 H(+)(in) = a quinol + NAD(+) + 4 H(+)(out). Functionally, NDH-1 shuttles electrons from NADH, via FMN and iron-sulfur (Fe-S) centers, to quinones in the respiratory chain. The immediate electron acceptor for the enzyme in this species is believed to be ubiquinone. Couples the redox reaction to proton translocation (for every two electrons transferred, four hydrogen ions are translocated across the cytoplasmic membrane), and thus conserves the redox energy in a proton gradient. In Rickettsia prowazekii (strain Madrid E), this protein is NADH-quinone oxidoreductase subunit N.